The sequence spans 74 residues: Serine rich endogenous peptide 23 (74 aa).

Positions 1 to 25 (MNKVVVYVLALSILLFFGLPNTTLA) are cleaved as a signal peptide. The SCOOP motif signature appears at 52 to 66 (KIAVGGSDSVRAHSK). The SxS motif essential for MIK2 binding signature appears at 58-60 (SDS).

The protein belongs to the serine rich endogenous peptide (SCOOP) phytocytokine family. As to quaternary structure, interacts with MIK2 (via extracellular leucine-rich repeat domain); this interaction triggers the formation of complex between MIK2 and the BAK1/SERK3 and SERK4 coreceptors, and subsequent BAK1 activation by phosphorylation. Mostly expressed in roots, and, to a lower extent, in seedlings shoots.

It is found in the cell membrane. Its subcellular location is the secreted. The protein resides in the extracellular space. It localises to the apoplast. Brassicaceae-specific phytocytokine (plant endogenous peptide released into the apoplast) perceived by MIK2 in a BAK1/SERK3 and SERK4 coreceptors-dependent manner, that modulates various physiological and antimicrobial processes including growth prevention and reactive oxygen species (ROS) response regulation. Inhibits root growth. This Arabidopsis thaliana (Mouse-ear cress) protein is Serine rich endogenous peptide 23.